The chain runs to 333 residues: MAANAAGPASRYDVTLDQSDAELVEEIAWKLATQATGRPDDAEWVEAARNAWHAWPATLRRDLAGFRRDSGPDGAIVLRGLPVDSMGLPPTPRVNGSVQREASLGAAVLLMTACGLGDPGAFLPEKNGALVQDVVPVPGMEEFQGNAGSTLLTFHNENAFHEHRPDFVMLLCLRADPTGRAGLRTACVRRVLPLLSDSTVDALWAPEFRTAPPPSFQLSGPEEAPAPVLLGDRSDPDLRVDLAATEPVTERAAEALRELQAHFDATAVTHRLLPGELAIVDNRVTVHGRTEFTPRYDGTDRWLQRTFVLTDLRRSRAMRPADGYVLGAAPQPA.

Residues Glu125 and Asn146 each contribute to the L-asparagine site. Fe cation contacts are provided by His155 and Glu157. L-asparagine is bound by residues Glu157 and Asn158. Fe cation is bound at residue His287. Arg301 contributes to the 2-oxoglutarate binding site. An L-asparagine-binding site is contributed by Arg305.

The protein belongs to the clavaminate synthase family. Fe(2+) is required as a cofactor.

The catalysed reaction is L-asparagine + 2-oxoglutarate + O2 = (2S,3S)-3-hydroxyasparagine + succinate + CO2. Its pathway is antibiotic biosynthesis; calcium-dependent antibiotic biosynthesis. Functionally, catalyzes the 3-hydroxylation of L-asparagine to (2S,3S)-3-hydroxyasparagine. The 3-hydroxylated asparagine produced is incorporated at position 9 during the biosynthesis of the non-ribosomally synthesized calcium-dependent antibiotic (CDA), a 11-residue acidic lipopeptide lactone. Is able to hydroxylate only free L-asparagine, since it hydroxylates neither a CDA analog with unmodified Asn at position 9 nor a peptidyl-carrier-protein (PCP)-bound asparagine. Is not active toward D-asparagine. This chain is L-asparagine oxygenase (asnO), found in Streptomyces coelicolor (strain ATCC BAA-471 / A3(2) / M145).